Reading from the N-terminus, the 1722-residue chain is Formin-2 (1722 aa).

Composition is skewed to basic and acidic residues over residues 1–17 and 27–36; these read MGNQ…DALH and LGPRDVEATK. Disordered stretches follow at residues 1–104, 126–189, and 207–475; these read MGNQ…QALQ, DEAG…FHSA, and QQQQ…DGGL. Positions 51 to 60 are enriched in gly residues; that stretch reads GGGGGGGGGE. The segment covering 61–70 has biased composition (basic and acidic residues); it reads SGKKKSKSDS. Ser93 is modified (phosphoserine). A compositionally biased stretch (polar residues) spans 172–182; it reads GQRTSSGSDTD. The stretch at 193 to 231 forms a coiled coil; that stretch reads EDLLSDIQQAIRLQQQQQQQLQLQLQQQQQQQQLQGAEE. Composition is skewed to low complexity over residues 207 to 227 and 322 to 342; these read QQQQ…QQLQ and AFPF…VRGA. Positions 344 to 355 are enriched in acidic residues; sequence DTDEEGEEDAFE. Low complexity-rich tracts occupy residues 389–404 and 427–441; these read PDAP…PAPS and SSPN…NQSP. A phosphoserine mark is found at Ser482 and Ser516. Residues 612-663 are disordered; the sequence is DYSEGQFPRRVPSMGPPSKPPDEEHRLEDAETESQSAVSETPQKRSDAVQKE. Composition is skewed to basic and acidic residues over residues 631–640 and 653–663; these read PPDEEHRLED and PQKRSDAVQKE. Residues 670 to 706 adopt a coiled-coil conformation; that stretch reads EGQATVIQQLEQTIEDLRTKIAELERQYPALDTEVAS. The region spanning 758 to 1268 is the FH1 domain; that stretch reads PPVDGLPGRP…VCGFLPPPLP (511 aa). Residues 797-1252 form a disordered region; it reads QLDSHQPTQS…PPLLPQVGSS (456 aa). Polar residues-rich tracts occupy residues 821–838 and 845–855; these read GQGQ…TEFQ and VSSAFKNSCNI. Residues 897–1246 show a composition bias toward pro residues; that stretch reads PQPPPLQGTE…LLPVSGPPLL (350 aa). Residues 1283-1698 form the FH2 domain; it reads RKQPIEPCRP…KEAEEVCRQK (416 aa). Coiled coils occupy residues 1567–1597 and 1677–1699; these read QASQ…AGKV and KKEN…RQKK. An important for interaction with SPIRE1 region spans residues 1715 to 1722; that stretch reads KAKISMKT.

The protein belongs to the formin homology family. Cappuccino subfamily. Interacts with SPIRE1. Binds actin. Interacts with CDKN1A. As to expression, expressed almost exclusively in the developing and mature central nervous system.

The protein resides in the cytoplasm. The protein localises to the cytoskeleton. It is found in the cytosol. It localises to the perinuclear region. Its subcellular location is the nucleus. The protein resides in the nucleolus. The protein localises to the cell membrane. It is found in the cytoplasmic vesicle membrane. It localises to the cell cortex. Its function is as follows. Actin-binding protein that is involved in actin cytoskeleton assembly and reorganization. Acts as an actin nucleation factor and promotes assembly of actin filaments together with SPIRE1 and SPIRE2. Involved in intracellular vesicle transport along actin fibers, providing a novel link between actin cytoskeleton dynamics and intracellular transport. Required for asymmetric spindle positioning, asymmetric oocyte division and polar body extrusion during female germ cell meiosis. Plays a role in responses to DNA damage, cellular stress and hypoxia by protecting CDKN1A against degradation, and thereby plays a role in stress-induced cell cycle arrest. Also acts in the nucleus: together with SPIRE1 and SPIRE2, promotes assembly of nuclear actin filaments in response to DNA damage in order to facilitate movement of chromatin and repair factors after DNA damage. Protects cells against apoptosis by protecting CDKN1A against degradation. The protein is Formin-2 (FMN2) of Homo sapiens (Human).